The following is a 1259-amino-acid chain: Clustered mitochondria protein homolog (1259 aa).

A compositionally biased stretch (polar residues) spans 1–27; that stretch reads MSQTNGNMEHSKETPQSQEVEQLTNGN. Residues 1–38 are disordered; that stretch reads MSQTNGNMEHSKETPQSQEVEQLTNGNHPEEQQEEEEN. Positions 324–568 constitute a Clu domain; sequence DITRSQESYL…RVTPLDVMWQ (245 aa). Composition is skewed to basic and acidic residues over residues 612–628 and 634–647; these read AEAEKEKPAESSESKEQ and TEEKTEESSDQERV. Disordered stretches follow at residues 612–647 and 881–908; these read AEAEKEKPAESSESKEQDSEEKTEEKTEESSDQERV and VVNGANNAAQDEGKKKKKKGADKSPSRA. TPR repeat units follow at residues 982 to 1015, 1024 to 1057, and 1066 to 1099; these read AKLYHQLSMLYYQTDEKEAAVELARKAVIVTERT, ILAYLNLSLFEHASGNTKTALVYIKHAMDLWKII, and ITTMNNAAVMLQHLKQYADSRKWFEASLSVCESL. Disordered stretches follow at residues 1192 to 1215 and 1229 to 1259; these read TKVQPQVGQTAPEASGAKNAANAS and EGGDTSSSRSKQKKRAAASNPKLRGSKKSSA.

It belongs to the CLU family. In terms of assembly, may associate with the eukaryotic translation initiation factor 3 (eIF-3) complex.

It is found in the cytoplasm. In terms of biological role, mRNA-binding protein involved in proper cytoplasmic distribution of mitochondria. This Aspergillus clavatus (strain ATCC 1007 / CBS 513.65 / DSM 816 / NCTC 3887 / NRRL 1 / QM 1276 / 107) protein is Clustered mitochondria protein homolog.